The primary structure comprises 69 residues: Putative membrane protein insertion efficiency factor (69 aa).

It belongs to the UPF0161 family.

Its subcellular location is the cell membrane. Functionally, could be involved in insertion of integral membrane proteins into the membrane. In Alkaliphilus oremlandii (strain OhILAs) (Clostridium oremlandii (strain OhILAs)), this protein is Putative membrane protein insertion efficiency factor.